The primary structure comprises 527 residues: Tetanolysin (527 aa).

The N-terminal stretch at 1–32 is a signal peptide; sequence MNKNVLKFVSRSLLIFSMTGLISNYNSSNVLA. Beta stranded transmembrane passes span 215–228, 235–244, 313–322, and 330–342; these read QSQL…NFKA, IDFDSIFKGE, SSHVKAAFKA, and SSNA…LNQS. The short motif at 484–494 is the Conserved undecapeptide element; sequence ECTGLAWEWWR. The Cholesterol binding motif lies at 516–517; that stretch reads TL.

This sequence belongs to the cholesterol-dependent cytolysin family. Homooligomeric pore complex containing 35-50 subunits; when inserted in the host membrane. Purified 48 and 53 kDa proteins with 4 different pIs (6.1, 5.6, 5.3 and 6.6) in decreasing order of activity.

The protein localises to the secreted. Its subcellular location is the host cell membrane. Its activity is regulated as follows. Cytolysis of host cells is inhibited by cholesterol. Its function is as follows. A cholesterol-dependent toxin that causes cytolysis by forming pores in cholesterol-containing host membranes. After binding to target membranes, the protein undergoes a major conformation change, leading to its insertion in the host membrane and formation of an oligomeric pore complex. Cholesterol is required for binding to host membranes, membrane insertion and pore formation; cholesterol binding is mediated by a Thr-Leu pair in the C-terminus. The polypeptide is Tetanolysin (Clostridium tetani (strain Massachusetts / E88)).